Here is a 298-residue protein sequence, read N- to C-terminus: MIIHPNFDPVAIHLGPLAVRWYGLMYLVGFIAAIVVGRIRLKLPYVAAQGWTAKDIDDMMFYGVLGTVLGGRLGYVLFYKADFYFSHPLDVFKVWEGGMSFHGGFLGVTLAMMLFAWQRKRHWLQVTDFVAPMVPTGLAAGRLGNFINGELWGRVTDPTAPWAMLFPGAMRDDAAWLPKHPALVEKWHLADVFMQYQMLPRHPSQLYEIALEGIALFFVLFLFARKPRPMGAISALFLIGYGLARFTVEFAREPDDFLGLLALGLSMGQWLSLPMIVAGVAMMVWAYRRRAANANAAA.

Transmembrane regions (helical) follow at residues 17 to 37, 59 to 79, and 97 to 117; these read LAVR…IVVG, MMFY…VLFY, and GGMS…LFAW. Residue Arg142 coordinates a 1,2-diacyl-sn-glycero-3-phospho-(1'-sn-glycerol). 2 helical membrane passes run 230 to 250 and 257 to 277; these read MGAI…TVEF and FLGL…PMIV.

This sequence belongs to the Lgt family.

The protein localises to the cell inner membrane. It carries out the reaction L-cysteinyl-[prolipoprotein] + a 1,2-diacyl-sn-glycero-3-phospho-(1'-sn-glycerol) = an S-1,2-diacyl-sn-glyceryl-L-cysteinyl-[prolipoprotein] + sn-glycerol 1-phosphate + H(+). It participates in protein modification; lipoprotein biosynthesis (diacylglyceryl transfer). In terms of biological role, catalyzes the transfer of the diacylglyceryl group from phosphatidylglycerol to the sulfhydryl group of the N-terminal cysteine of a prolipoprotein, the first step in the formation of mature lipoproteins. In Burkholderia cenocepacia (strain ATCC BAA-245 / DSM 16553 / LMG 16656 / NCTC 13227 / J2315 / CF5610) (Burkholderia cepacia (strain J2315)), this protein is Phosphatidylglycerol--prolipoprotein diacylglyceryl transferase.